Reading from the N-terminus, the 172-residue chain is Protein LOL2 (172 aa).

Putative zinc finger stretches follow at residues 4–34 (QIVC…VSST), 44–74 (HLIC…VNLV), and 82–112 (HLNC…ITNT).

It is found in the nucleus. Putative zinc finger that may be involved in programmed cell death and defense response. The protein is Protein LOL2 (LOL2) of Oryza sativa subsp. japonica (Rice).